A 341-amino-acid polypeptide reads, in one-letter code: Ribonucleoside-diphosphate reductase subunit beta (341 aa).

Positions 89, 120, and 123 each coordinate Fe cation. The active site involves Tyr-127. 3 residues coordinate Fe cation: Glu-185, Glu-219, and His-222.

It belongs to the ribonucleoside diphosphate reductase small chain family. As to quaternary structure, tetramer of two alpha and two beta subunits. Requires Fe cation as cofactor.

It carries out the reaction a 2'-deoxyribonucleoside 5'-diphosphate + [thioredoxin]-disulfide + H2O = a ribonucleoside 5'-diphosphate + [thioredoxin]-dithiol. Its function is as follows. Provides the precursors necessary for DNA synthesis. Catalyzes the biosynthesis of deoxyribonucleotides from the corresponding ribonucleotides. This Helicobacter pylori (strain J99 / ATCC 700824) (Campylobacter pylori J99) protein is Ribonucleoside-diphosphate reductase subunit beta (nrdB).